The chain runs to 258 residues: Snake venom serine protease CL2 (258 aa).

A signal peptide spans 1 to 18 (MVLIRVLANLLIIQLSYA). Positions 19 to 24 (QKSSEL) are excised as a propeptide. In terms of domain architecture, Peptidase S1 spans 25 to 249 (VIGGDECNIN…YTDWIKSIIA (225 aa)). Cystine bridges form between Cys-31/Cys-163, Cys-50/Cys-66, Cys-98/Cys-256, Cys-142/Cys-210, Cys-174/Cys-189, and Cys-200/Cys-225. N-linked (GlcNAc...) asparagine glycosylation occurs at Asn-44. His-65 serves as the catalytic Charge relay system. Asn-103 carries N-linked (GlcNAc...) asparagine glycosylation. Asp-110 functions as the Charge relay system in the catalytic mechanism. A glycan (N-linked (GlcNAc...) asparagine) is linked at Asn-121. Catalysis depends on Ser-204, which acts as the Charge relay system. The N-linked (GlcNAc...) asparagine glycan is linked to Asn-251.

It belongs to the peptidase S1 family. Snake venom subfamily. As to quaternary structure, monomer. Expressed by the venom gland.

It localises to the secreted. Functionally, snake venom serine protease that may act in the hemostasis system of the prey. This chain is Snake venom serine protease CL2, found in Trimeresurus stejnegeri (Chinese green tree viper).